The following is a 212-amino-acid chain: ATP phosphoribosyltransferase (212 aa).

Belongs to the ATP phosphoribosyltransferase family. Short subfamily. Heteromultimer composed of HisG and HisZ subunits.

Its subcellular location is the cytoplasm. The catalysed reaction is 1-(5-phospho-beta-D-ribosyl)-ATP + diphosphate = 5-phospho-alpha-D-ribose 1-diphosphate + ATP. Its pathway is amino-acid biosynthesis; L-histidine biosynthesis; L-histidine from 5-phospho-alpha-D-ribose 1-diphosphate: step 1/9. In terms of biological role, catalyzes the condensation of ATP and 5-phosphoribose 1-diphosphate to form N'-(5'-phosphoribosyl)-ATP (PR-ATP). Has a crucial role in the pathway because the rate of histidine biosynthesis seems to be controlled primarily by regulation of HisG enzymatic activity. The chain is ATP phosphoribosyltransferase from Clostridium botulinum (strain Okra / Type B1).